Consider the following 105-residue polypeptide: Heat shock protein HspQ (105 aa).

Belongs to the HspQ family.

The protein resides in the cytoplasm. Functionally, involved in the degradation of certain denaturated proteins, including DnaA, during heat shock stress. This chain is Heat shock protein HspQ, found in Blochmanniella pennsylvanica (strain BPEN).